Reading from the N-terminus, the 184-residue chain is MGLLTILKKMKQKERDVRLLMLGLDNAGKTTILKKFNGEDVDTISPTLGFNIKTLEHRGFKLNIWDVGGQKSLRSYWRNYFESTDGLIWVVDSADRQRMQDCQRELQSLLVEERLAGATLLIFANKQDLPGALSCNAIQEALELDSIRSHHWRIQGCSAVTGEDLLPGIDWLLDDISSRVFTAD.

Gly2 carries N-myristoyl glycine lipidation. 23–30 (GLDNAGKT) lines the GTP pocket. Ser45 carries the post-translational modification Phosphoserine. GTP-binding positions include 66–70 (DVGGQ) and Gly68. Lys71 participates in a covalent cross-link: Glycyl lysine isopeptide (Lys-Gly) (interchain with G-Cter in ubiquitin). 125–128 (NKQD) contacts GTP.

This sequence belongs to the small GTPase superfamily. Arf family. As to quaternary structure, found in a complex with ARL2, ARL2BP and SLC25A6. Found in a complex with at least ARL2, PPP2CB, PPP2R1A, PPP2R2A, PPP2R5E and TBCD. Interacts with ELMOD2. The GTP-bound form interacts with ARL2BP. The GDP-bound form interacts preferentially with TBCD. Interacts with UNC119. Found in a complex with ARL2, ARL2BP and SLC25A4. The GTP-bound form interacts with PDE6D. In terms of processing, not N-myristoylated. As to expression, expressed in brain, retina, lung, cerebellum, liver, kidney, hippocampus, spleen, cortex and heart (at protein level).

Its subcellular location is the mitochondrion intermembrane space. The protein resides in the cytoplasm. The protein localises to the cytoskeleton. It is found in the microtubule organizing center. It localises to the centrosome. Its subcellular location is the nucleus. Its function is as follows. Small GTP-binding protein which cycles between an inactive GDP-bound and an active GTP-bound form, and the rate of cycling is regulated by guanine nucleotide exchange factors (GEF) and GTPase-activating proteins (GAP). GTP-binding protein that does not act as an allosteric activator of the cholera toxin catalytic subunit. Regulates formation of new microtubules and centrosome integrity. Prevents the TBCD-induced microtubule destruction. Participates in association with TBCD, in the disassembly of the apical junction complexes. Antagonizes the effect of TBCD on epithelial cell detachment and tight and adherens junctions disassembly. Together with ARL2, plays a role in the nuclear translocation, retention and transcriptional activity of STAT3. Component of a regulated secretory pathway involved in Ca(2+)-dependent release of acetylcholine. Required for normal progress through the cell cycle. The polypeptide is ADP-ribosylation factor-like protein 2 (Arl2) (Rattus norvegicus (Rat)).